Reading from the N-terminus, the 196-residue chain is ATP-dependent Clp protease proteolytic subunit (196 aa).

Catalysis depends on Ser-98, which acts as the Nucleophile. His-123 is an active-site residue.

It belongs to the peptidase S14 family. Fourteen ClpP subunits assemble into 2 heptameric rings which stack back to back to give a disk-like structure with a central cavity, resembling the structure of eukaryotic proteasomes.

Its subcellular location is the cytoplasm. It catalyses the reaction Hydrolysis of proteins to small peptides in the presence of ATP and magnesium. alpha-casein is the usual test substrate. In the absence of ATP, only oligopeptides shorter than five residues are hydrolyzed (such as succinyl-Leu-Tyr-|-NHMec, and Leu-Tyr-Leu-|-Tyr-Trp, in which cleavage of the -Tyr-|-Leu- and -Tyr-|-Trp bonds also occurs).. Functionally, cleaves peptides in various proteins in a process that requires ATP hydrolysis. Has a chymotrypsin-like activity. Plays a major role in the degradation of misfolded proteins. In Anoxybacillus flavithermus (strain DSM 21510 / WK1), this protein is ATP-dependent Clp protease proteolytic subunit.